Here is a 728-residue protein sequence, read N- to C-terminus: FAS1 domain-containing protein fsc1 (728 aa).

The N-terminal stretch at 1–21 (MNLQFRLYLLFILLFISFANG) is a signal peptide. At 22–670 (KNEYEDKSTS…TKRQNRWRIT (649 aa)) the chain is on the vacuolar side. FAS1 domains lie at 29–151 (STSI…DNII) and 154–285 (PPPA…SSLI). Residue Asn89 is glycosylated (N-linked (GlcNAc...) asparagine). Residues Asn404 and Asn501 are each glycosylated (N-linked (GlcNAc...) asparagine). Residues 671–691 (FISISGLLLSVGICVLCYKIY) traverse the membrane as a helical segment. The Cytoplasmic portion of the chain corresponds to 692–728 (FKFFRNRFMNQGEREPLLAPADSDTMAGRRNSSSLSV).

It is found in the vacuole membrane. Functionally, required for the fusion of autophagosomes with the vacuole. The sequence is that of FAS1 domain-containing protein fsc1 (fsc1) from Schizosaccharomyces pombe (strain 972 / ATCC 24843) (Fission yeast).